Reading from the N-terminus, the 339-residue chain is Dihydroorotate dehydrogenase (quinone) (339 aa).

FMN is bound by residues 61-65 and Thr85; that span reads AGLDK. Residue Lys65 participates in substrate binding. A substrate-binding site is contributed by 110 to 114; that stretch reads NRMGF. Residues Asn138 and Asn171 each coordinate FMN. Asn171 is a substrate binding site. Catalysis depends on Ser174, which acts as the Nucleophile. Asn176 is a substrate binding site. Residues Lys216 and Thr244 each contribute to the FMN site. Residue 245-246 coordinates substrate; sequence NT. Residues Gly267, Gly296, and 317–318 contribute to the FMN site; that span reads YS.

This sequence belongs to the dihydroorotate dehydrogenase family. Type 2 subfamily. Monomer. The cofactor is FMN.

The protein resides in the cell membrane. It carries out the reaction (S)-dihydroorotate + a quinone = orotate + a quinol. Its pathway is pyrimidine metabolism; UMP biosynthesis via de novo pathway; orotate from (S)-dihydroorotate (quinone route): step 1/1. Functionally, catalyzes the conversion of dihydroorotate to orotate with quinone as electron acceptor. In Saccharophagus degradans (strain 2-40 / ATCC 43961 / DSM 17024), this protein is Dihydroorotate dehydrogenase (quinone).